Reading from the N-terminus, the 1620-residue chain is ABC-type organic anion transporter ABCA8A (1620 aa).

7 helical membrane passes run 30 to 50 (TFLEFLYTALILLSLILFLQL), 224 to 244 (CFLFFCIIRFSPLTYYISAGV), 263 to 283 (SAFWLSWGLLYGVIVFVVTLL), 294 to 314 (VFLTGFMVIFSLFFFYGLSLI), 328 to 348 (FLTDLVVFLLTVSCGSLGFTA), 357 to 377 (LEWLLSLLSPFAFMLGMVQLL), and 397 to 417 (IGTIFMLFFDGVFYLLLTFYF). N-linked (GlcNAc...) asparagine glycans are attached at residues Asn-454 and Asn-482. The ABC transporter 1 domain occupies 478–713 (IRIRNLTKDY…WGIGYHLSLQ (236 aa)). Residue 514-521 (GHSGAGKS) participates in ATP binding. Residues 861-881 (IVILILVLGIGLLHILSANIY) form a helical membrane-spanning segment. Asn-967 is a glycosylation site (N-linked (GlcNAc...) asparagine). 7 consecutive transmembrane segments (helical) span residues 979–999 (CFPVLVDIVSNGLLGLFAPSA), 1019–1039 (YLAYFFLWVLLMACVPPYISM), 1068–1088 (ALFEVPVYCALILSIFIAFYA), 1105–1125 (ILYVGGYAMSVIFMTYVISFI), 1133–1153 (SGLWSLCFYIVSFFSMCFMLI), 1159–1179 (ISLFVLIALVPPATLGGCTLL), and 1196–1216 (EYSYLFFLAPLLHFAIFVVIL). In terms of domain architecture, ABC transporter 2 spans 1284 to 1517 (LRKEYKGKKK…FGKEYLLEMK (234 aa)). Residue 1322-1329 (GHNGAGKS) coordinates ATP.

It belongs to the ABC transporter superfamily. ABCA family. As to expression, expressed in lung, heart, liver, skeletal muscle and testis. Highly expressed in the liver, and is also abundant in heart and skeletal muscle. Highly expressed in heart.

The protein localises to the cell membrane. It is found in the basolateral cell membrane. It carries out the reaction taurocholate(in) + ATP + H2O = taurocholate(out) + ADP + phosphate + H(+). The enzyme catalyses cholesterol(in) + ATP + H2O = cholesterol(out) + ADP + phosphate + H(+). Its activity is regulated as follows. Cholesterol efflux is increased by extracellularly applied taurocholate. Functionally, mediates cholesterol and taurocholate efflux. Through the interaction with ABCA1 potentiates the cholesterol efflux to lipid-free APOA1, in turn regulates high-density lipoprotein cholesterol levels. The polypeptide is ABC-type organic anion transporter ABCA8A (Mus musculus (Mouse)).